The primary structure comprises 126 residues: Acidic phospholipase A2 3 (126 aa).

The propeptide occupies 1-7 (SNRPMPL). Disulfide bonds link cysteine 18–cysteine 78, cysteine 33–cysteine 125, cysteine 35–cysteine 51, cysteine 50–cysteine 106, cysteine 57–cysteine 99, cysteine 67–cysteine 92, and cysteine 85–cysteine 97. Residues tyrosine 34, glycine 36, and glycine 38 each contribute to the Ca(2+) site. The active site involves histidine 54. Residue aspartate 55 coordinates Ca(2+). Residue aspartate 100 is part of the active site.

The protein belongs to the phospholipase A2 family. Group I subfamily. D49 sub-subfamily. Requires Ca(2+) as cofactor. As to expression, expressed by the venom gland.

It localises to the secreted. The enzyme catalyses a 1,2-diacyl-sn-glycero-3-phosphocholine + H2O = a 1-acyl-sn-glycero-3-phosphocholine + a fatty acid + H(+). Functionally, PLA2 catalyzes the calcium-dependent hydrolysis of the 2-acyl groups in 3-sn-phosphoglycerides. The polypeptide is Acidic phospholipase A2 3 (Naja sagittifera (Andaman cobra)).